The sequence spans 228 residues: Ribose-5-phosphate isomerase A (228 aa).

Substrate-binding positions include 26-29, 81-84, and 94-97; these read SGST, DGAD, and KGGG. Residue Glu103 is the Proton acceptor of the active site. Lys121 provides a ligand contact to substrate.

The protein belongs to the ribose 5-phosphate isomerase family. As to quaternary structure, homodimer.

It carries out the reaction aldehydo-D-ribose 5-phosphate = D-ribulose 5-phosphate. The protein operates within carbohydrate degradation; pentose phosphate pathway; D-ribose 5-phosphate from D-ribulose 5-phosphate (non-oxidative stage): step 1/1. Catalyzes the reversible conversion of ribose-5-phosphate to ribulose 5-phosphate. The sequence is that of Ribose-5-phosphate isomerase A from Shouchella clausii (strain KSM-K16) (Alkalihalobacillus clausii).